The primary structure comprises 100 residues: RNA-binding protein YlxQ (100 aa).

The protein belongs to the eukaryotic ribosomal protein eL8 family.

Its function is as follows. RNA-binding protein that recognizes the K-turn motif present in ribosomal RNA, but also in box C/D and box C'/D' sRNAs. This chain is RNA-binding protein YlxQ, found in Bacillus subtilis (strain 168).